A 239-amino-acid polypeptide reads, in one-letter code: NAD(P)H-hydrate epimerase (239 aa).

One can recognise a YjeF N-terminal domain in the interval A14 to I220. Residue N64 to D68 participates in (6S)-NADPHX binding. Positions 65 and 126 each coordinate K(+). (6S)-NADPHX-binding positions include G130 to E136 and D159. S162 contributes to the K(+) binding site.

This sequence belongs to the NnrE/AIBP family. The cofactor is K(+).

Its subcellular location is the cytoplasm. It localises to the mitochondrion. The enzyme catalyses (6R)-NADHX = (6S)-NADHX. The catalysed reaction is (6R)-NADPHX = (6S)-NADPHX. Catalyzes the epimerization of the S- and R-forms of NAD(P)HX, a damaged form of NAD(P)H that is a result of enzymatic or heat-dependent hydration. This is a prerequisite for the S-specific NAD(P)H-hydrate dehydratase to allow the repair of both epimers of NAD(P)HX. This is NAD(P)H-hydrate epimerase from Phaeosphaeria nodorum (strain SN15 / ATCC MYA-4574 / FGSC 10173) (Glume blotch fungus).